Here is a 167-residue protein sequence, read N- to C-terminus: Signal peptidase complex catalytic subunit SEC11 (167 aa).

Over 1–12 (MNIRHQLVQFLN) the chain is Cytoplasmic. The chain crosses the membrane as a helical; Signal-anchor for type II membrane protein span at residues 13 to 30 (LALVLSSAFMAWKTLSVI). Residues 31 to 167 (TNSHSPIVVV…MGISSLLSNE (137 aa)) are Lumenal-facing. Residues Ser-44, His-83, and Asp-109 each act as charge relay system in the active site. The interval 153–164 (TLLGLMGISSLL) is C-terminal short (CTS) helix.

This sequence belongs to the peptidase S26B family. In terms of assembly, component of the signal peptidase complex (SPC) composed of a catalytic subunit SEC11 and three accessory subunits SPC1, SPC2 and SPC3. The complex induces a local thinning of the ER membrane which is used to measure the length of the signal peptide (SP) h-region of protein substrates. This ensures the selectivity of the complex towards h-regions shorter than 18-20 amino acids. SPC associates with the translocon complex.

It is found in the endoplasmic reticulum membrane. It catalyses the reaction Cleavage of hydrophobic, N-terminal signal or leader sequences from secreted and periplasmic proteins.. In terms of biological role, catalytic component of the signal peptidase complex (SPC) which catalyzes the cleavage of N-terminal signal sequences from nascent proteins as they are translocated into the lumen of the endoplasmic reticulum. Specifically cleaves N-terminal signal peptides that contain a hydrophobic alpha-helix (h-region) shorter than 18-20 amino acids. This chain is Signal peptidase complex catalytic subunit SEC11 (SEC11), found in Debaryomyces hansenii (strain ATCC 36239 / CBS 767 / BCRC 21394 / JCM 1990 / NBRC 0083 / IGC 2968) (Yeast).